The chain runs to 239 residues: Thymidylate kinase (239 aa).

10 to 17 lines the ATP pocket; that stretch reads GINGVGKS.

It belongs to the thymidylate kinase family.

The catalysed reaction is dTMP + ATP = dTDP + ADP. Its pathway is pyrimidine metabolism; dTTP biosynthesis. Functionally, catalyzes the conversion of dTMP to dTDP. The sequence is that of Thymidylate kinase (TMK) from African swine fever virus (isolate Warthog/Namibia/Wart80/1980) (ASFV).